The following is a 464-amino-acid chain: 3-isopropylmalate dehydratase large subunit (464 aa).

3 residues coordinate [4Fe-4S] cluster: C337, C397, and C400.

This sequence belongs to the aconitase/IPM isomerase family. LeuC type 1 subfamily. Heterodimer of LeuC and LeuD. The cofactor is [4Fe-4S] cluster.

It carries out the reaction (2R,3S)-3-isopropylmalate = (2S)-2-isopropylmalate. It participates in amino-acid biosynthesis; L-leucine biosynthesis; L-leucine from 3-methyl-2-oxobutanoate: step 2/4. In terms of biological role, catalyzes the isomerization between 2-isopropylmalate and 3-isopropylmalate, via the formation of 2-isopropylmaleate. In Bacillus cereus (strain AH187), this protein is 3-isopropylmalate dehydratase large subunit.